A 217-amino-acid polypeptide reads, in one-letter code: Oxygen-evolving enhancer protein 3, chloroplastic (217 aa).

Disordered regions lie at residues 1-25 (MAQAMASMTGLSQGVQLPAGPRRAG) and 73-95 (PIKLGPPPPPSGGLPGTLNSDQA). Residues 1–63 (MAQAMASMTG…ATGIAGGALA (63 aa)) constitute a chloroplast transit peptide.

Belongs to the PsbQ family.

The protein resides in the plastid. Its subcellular location is the chloroplast thylakoid membrane. The polypeptide is Oxygen-evolving enhancer protein 3, chloroplastic (Oryza sativa subsp. indica (Rice)).